The sequence spans 247 residues: Large ribosomal subunit protein uL24m (247 aa).

In terms of domain architecture, KOW spans 84 to 117 (FFRGDRIEVLVGKDKGKQGIVTQVIPERNWVIVE).

It belongs to the universal ribosomal protein uL24 family. As to quaternary structure, component of the mitochondrial ribosome large subunit (39S) which comprises a 16S rRNA and about 50 distinct proteins.

The protein localises to the mitochondrion. The sequence is that of Large ribosomal subunit protein uL24m (mRpL24) from Drosophila pseudoobscura pseudoobscura (Fruit fly).